A 349-amino-acid polypeptide reads, in one-letter code: N-acetyl-gamma-glutamyl-phosphate reductase (349 aa).

Cys153 is a catalytic residue.

It belongs to the NAGSA dehydrogenase family. Type 1 subfamily.

The protein localises to the cytoplasm. The catalysed reaction is N-acetyl-L-glutamate 5-semialdehyde + phosphate + NADP(+) = N-acetyl-L-glutamyl 5-phosphate + NADPH + H(+). It participates in amino-acid biosynthesis; L-arginine biosynthesis; N(2)-acetyl-L-ornithine from L-glutamate: step 3/4. Its function is as follows. Catalyzes the NADPH-dependent reduction of N-acetyl-5-glutamyl phosphate to yield N-acetyl-L-glutamate 5-semialdehyde. This chain is N-acetyl-gamma-glutamyl-phosphate reductase, found in Magnetococcus marinus (strain ATCC BAA-1437 / JCM 17883 / MC-1).